A 95-amino-acid polypeptide reads, in one-letter code: Selenoprotein K (95 aa).

The helical transmembrane segment at 20 to 42 (LSFITDFFWGIAEFVVLFFRTLL) threads the bilayer. Residues 47-95 (KKRRGYGSSSDSRYDDGRGPPGNPPRRRMGRINHLQGPNPPPMAGGUGR) are disordered. Residue Sec93 is a non-standard amino acid, selenocysteine.

Belongs to the selenoprotein K family. In terms of assembly, interacts with DERL1, DERL2, DERL3 and SELENOS. The SELENOK-SELENOS complex interacts with VCP. Interacts with ZDHHC6. In terms of processing, cleaved by CAPN2/m-calpain in resting macrophages but not in activated macrophages. Macrophage activation up-regulates expression of the calpain inhibitor CAST/calpastatin, resulting in inhibition of CAPN2 activity. Truncated SELENOK proteins produced by failed UGA/Sec decoding are ubiquitinated by the CRL2(KLHDC2) complex, which recognizes the diglycine (Gly-Gly) at the C-terminus of truncated SELENOK proteins.

It is found in the endoplasmic reticulum membrane. It localises to the cell membrane. Required for Ca(2+) flux in immune cells and plays a role in T-cell proliferation and in T-cell and neutrophil migration. Involved in endoplasmic reticulum-associated degradation (ERAD) of soluble glycosylated proteins. Required for palmitoylation and cell surface expression of CD36 and involved in macrophage uptake of low-density lipoprotein and in foam cell formation. Together with ZDHHC6, required for palmitoylation of ITPR1 in immune cells, leading to regulate ITPR1 stability and function. Plays a role in protection of cells from ER stress-induced apoptosis. Protects cells from oxidative stress when overexpressed in cardiomyocytes. The chain is Selenoprotein K from Bos taurus (Bovine).